The primary structure comprises 278 residues: Proline-rich 28 kDa antigen homolog (278 aa).

The signal sequence occupies residues 1–28; it reads MIQSTQTWRVLAGGLAATAMGVTVFAGG.

It to M.tuberculosis Rv0040c.

The protein is Proline-rich 28 kDa antigen homolog of Mycobacterium leprae (strain TN).